Consider the following 173-residue polypeptide: Disulfide bond formation protein B (173 aa).

Residues 1 to 11 are Cytoplasmic-facing; that stretch reads MNALQWSFRAQ. The chain crosses the membrane as a helical span at residues 12-28; that stretch reads CLTGFLFCTGLLAYAIF. The Periplasmic segment spans residues 29–46; that stretch reads LQLHQGLEPCPLCIFQRI. A disulfide bond links cysteine 38 and cysteine 41. Residues 47–63 traverse the membrane as a helical segment; the sequence is AFAVLGILFLIAGLYNS. The Cytoplasmic portion of the chain corresponds to 64–70; sequence SNVYTRK. A helical membrane pass occupies residues 71–88; that stretch reads AYGLLIFLTAIIGTGIAG. At 89–145 the chain is on the periplasmic side; it reads RHVWVQLMPHNTISSCGSPLSFLSETMGPFEVFRTVLTGTSNCGNIDWRFLGLSMPM. A disulfide bond links cysteine 104 and cysteine 131. Residues 146-164 form a helical membrane-spanning segment; that stretch reads WSMFWFVALALLGLLVGFK. Residues 165–173 lie on the Cytoplasmic side of the membrane; that stretch reads AERRKPLFS.

It belongs to the DsbB family.

It is found in the cell inner membrane. Its function is as follows. Required for disulfide bond formation in some periplasmic proteins. Acts by oxidizing the DsbA protein. The protein is Disulfide bond formation protein B of Xylella fastidiosa (strain Temecula1 / ATCC 700964).